Consider the following 413-residue polypeptide: Aspartate kinase (413 aa).

2 ACT domains span residues 267 to 341 (LTIR…GDTK) and 347 to 413 (IVGV…RQGE).

The protein belongs to the aspartokinase family. As to quaternary structure, homotrimer. In the presence of inhibitory amino acids the Stokes radius of the protein increases, suggesting its oligomeric state may change.

The protein resides in the cytoplasm. It carries out the reaction L-aspartate + ATP = 4-phospho-L-aspartate + ADP. It participates in amino-acid biosynthesis; L-lysine biosynthesis via DAP pathway; (S)-tetrahydrodipicolinate from L-aspartate: step 1/4. The protein operates within amino-acid biosynthesis; L-methionine biosynthesis via de novo pathway; L-homoserine from L-aspartate: step 1/3. Its pathway is amino-acid biosynthesis; L-threonine biosynthesis; L-threonine from L-aspartate: step 1/5. With respect to regulation, activated by L-lysine, L-methionine, and L-isoleucine. L-threonine, at low concentrations, is a mild activator and has a weak inhibitory effect only at concentrations over 10 mM. Strongly feedback inhibited by the concerted combination of L-lysine and L-threonine and slightly feedback inhibited by the concerted combination of L-threonine and L-methionine. Activated by the combination of L-methionine and L-lysine, L-methionine and L-isoleucine and L-lysine and L-isoleucine. Functionally, involved in the biosynthesis of L-aspartate-beta-semialdehyde which is a central intermediate in the biosynthesis of different amino acids (L-lysine, L-methionine, L-threonine). Catalyzes the phosphorylation of the beta-carboxyl group of L-aspartate to yield 4-phospho-L-aspartate. This is Aspartate kinase from Pseudomonas fluorescens (strain SBW25).